Reading from the N-terminus, the 117-residue chain is Large ribosomal subunit protein bL20 (117 aa).

This sequence belongs to the bacterial ribosomal protein bL20 family.

Binds directly to 23S ribosomal RNA and is necessary for the in vitro assembly process of the 50S ribosomal subunit. It is not involved in the protein synthesizing functions of that subunit. The sequence is that of Large ribosomal subunit protein bL20 from Brachyspira hyodysenteriae (strain ATCC 49526 / WA1).